We begin with the raw amino-acid sequence, 254 residues long: Imidazole glycerol phosphate synthase subunit HisF (254 aa).

Residues D12 and D131 contribute to the active site.

It belongs to the HisA/HisF family. As to quaternary structure, heterodimer of HisH and HisF.

The protein resides in the cytoplasm. The enzyme catalyses 5-[(5-phospho-1-deoxy-D-ribulos-1-ylimino)methylamino]-1-(5-phospho-beta-D-ribosyl)imidazole-4-carboxamide + L-glutamine = D-erythro-1-(imidazol-4-yl)glycerol 3-phosphate + 5-amino-1-(5-phospho-beta-D-ribosyl)imidazole-4-carboxamide + L-glutamate + H(+). The protein operates within amino-acid biosynthesis; L-histidine biosynthesis; L-histidine from 5-phospho-alpha-D-ribose 1-diphosphate: step 5/9. IGPS catalyzes the conversion of PRFAR and glutamine to IGP, AICAR and glutamate. The HisF subunit catalyzes the cyclization activity that produces IGP and AICAR from PRFAR using the ammonia provided by the HisH subunit. The protein is Imidazole glycerol phosphate synthase subunit HisF of Kocuria rhizophila (strain ATCC 9341 / DSM 348 / NBRC 103217 / DC2201).